Reading from the N-terminus, the 185-residue chain is Elongation factor P (185 aa).

This sequence belongs to the elongation factor P family.

The protein resides in the cytoplasm. It functions in the pathway protein biosynthesis; polypeptide chain elongation. Involved in peptide bond synthesis. Stimulates efficient translation and peptide-bond synthesis on native or reconstituted 70S ribosomes in vitro. Probably functions indirectly by altering the affinity of the ribosome for aminoacyl-tRNA, thus increasing their reactivity as acceptors for peptidyl transferase. In Lactococcus lactis subsp. cremoris (strain MG1363), this protein is Elongation factor P.